Here is a 252-residue protein sequence, read N- to C-terminus: Maintenance of carboxysome distribution protein A (252 aa).

14 residues coordinate ATP: G11, G12, G14, K15, T16, T17, Q41, E147, K151, F182, R183, L216, E217, and S218. T16 is a Mg(2+) binding site.

Belongs to the ParA family. McdA subfamily. In terms of assembly, self-associates (probably a homodimer), interacts with McdB probably via the C-terminus of both proteins. Shows no signs of filament formation. Homodimerizes in the presence of ATP, making extra nucleotide contacts than with ADP or AMP-PNP. Each subunit binds 1 ATP molecule; Glu-147, Lys-151 and Arg-183 cross the dimer interface to contact ATP in the other subunit, while Phe-182, Arg-183 and Phe-221 stack with the adenine base in their own subunit.

It localises to the cytoplasm. The protein localises to the nucleoid. The catalysed reaction is ATP + H2O = ADP + phosphate + H(+). Its function is as follows. McdA and McdB together mediate carboxysome (Cb) spacing, size, ultrastructure and probably inheritance in the cell. Together they prevent Cb aggregation. McdA is an ATPase that forms dynamic gradients on the nucleoid in response to adapter protein McdB, which associates with carboxysomes. The interplay between McdA gradients on the nucleoid and McdB-bound carboxysomes result in the equal spacing of Cbs along the cell length. Binds nucleoid DNA in an ATP-dependent manner; neither ADP nor ATP-gamma-S support DNA binding. Upon ATP-binding dimerizes and binds nucleoid DNA; the (McdA-ATP)2 dimer transiently binds McdB-bound Cbs. McdA's ATPase activity is stimulated 2-fold by DNA and McdB; ATP hydrolysis causes McdA release from DNA. Overexpression leads to loss of McdA oscillation, diffuse nucleoid staining by McdA with formation of large carboxysome aggregates that are in regions depleted of McdA; McdA remains nucleoid-associated. In terms of biological role, mutagenesis studies (characterized in vivo) suggest ATP binding, protein dimerization and a conformational change are necessary for nucleoid DNA-binding and binding to McdB-bound Cbs, which tethers Cbs to the nucleoid. Eventual McdB-stimulated ATP hydrolysis causes de-dimerization of McdA which no longer binds the nucleoid and releases McdB and Cbs. McdB-bound Cbs then move to a region of higher McdA concentration, distributing Cbs across the nucleoid. Functionally, incorrect positioning (aggregation) of carboxysomes results in reduced CO(2) fixation by encapsulated ribulose-1,5-bisphosphate carboxylase (RuBisCO, cbbL/cbbS), which leads to slower growth, cell elongation, asymmetric cell division and an increase in RuBisCO levels. The polypeptide is Maintenance of carboxysome distribution protein A (Synechococcus elongatus (strain ATCC 33912 / PCC 7942 / FACHB-805) (Anacystis nidulans R2)).